Here is a 187-residue protein sequence, read N- to C-terminus: Elongation factor P (187 aa).

It belongs to the elongation factor P family.

The protein resides in the cytoplasm. It functions in the pathway protein biosynthesis; polypeptide chain elongation. In terms of biological role, involved in peptide bond synthesis. Stimulates efficient translation and peptide-bond synthesis on native or reconstituted 70S ribosomes in vitro. Probably functions indirectly by altering the affinity of the ribosome for aminoacyl-tRNA, thus increasing their reactivity as acceptors for peptidyl transferase. In Clavibacter michiganensis subsp. michiganensis (strain NCPPB 382), this protein is Elongation factor P.